A 538-amino-acid chain; its full sequence is MTSHHSWYRYSINPFVLMGLVALFLAATANLTFFEKAMAVYPVSDNLGFIISMAVAVMGAMLLIVVLLSYRYVLKPVLILLLIMGAVTSYFTDTYGTVYDTTMLQNAMQTDQAESKDLMNLAFFVRIIGLGVLPSVLVAVAKVNYPTWGKGLIQRAMTWGVSLVLLLVPIGLFSSQYASFFRVHKPVRFYINPITPIYSVGKLASIEYKKATAPTDTIYHAKDAVQTTKPSERKPRLVVFVVGETARADHVQFNGYGRETFPQLAKVDGLANFSQVTSCGTSTAYSVPCMFSYLGQDDYDVDTAKYQENVLDTLDRLGVGILWRDNNSDSKGVMDKLPATQYFDYKSATNNTICNTNPYNECRDVGMLVGLDDYVSANNGKDMLIMLHQMGNHGPAYFKRYDEQFAKFTPVCEGNELAKCEHQSLINAYDNALLATDDFIAKSIDWLKTHEANYDVAMLYVSDHGESLGENGVYLHGMPNAFAPKEQRAVPAFFWSNNTTFKPTASDTVLTHDAITPTLLKLFDVTAGKVKDRAAFIQ.

5 consecutive transmembrane segments (helical) span residues 14–34, 47–67, 72–92, 121–141, and 161–181; these read PFVL…LTFF, LGFI…IVVL, YVLK…SYFT, LAFF…VAVA, and VSLV…ASFF. Residues Glu-244 and Thr-283 each contribute to the Zn(2+) site. 3 cysteine pairs are disulfide-bonded: Cys-279–Cys-289, Cys-354–Cys-362, and Cys-412–Cys-420. Thr-283 carries the post-translational modification Phosphothreonine. Asp-463 and His-464 together coordinate Zn(2+).

Belongs to the phosphoethanolamine transferase family. In terms of assembly, monomer. Phosphorylated at Thr-283; may represent an intermediate in the catalytic mechanism.

The protein localises to the cell inner membrane. The enzyme catalyses lipid A (E. coli) + a 1,2-diacyl-sn-glycero-3-phosphoethanolamine + H(+) = lipid A 4'-(2-aminoethyl diphosphate) (E. coli) + a 1,2-diacyl-sn-glycerol. In terms of biological role, probably catalyzes the addition of a phosphoethanolamine moiety to lipid A. Phosphoethanolamine modification of lipid A confers polymyxin resistance. Confers resistance to polymyxin-type antibiotics such as colistin. The polypeptide is Phosphatidylethanolamine transferase Mcr-2 (Escherichia coli).